A 210-amino-acid chain; its full sequence is Uracil phosphoribosyltransferase (210 aa).

5-phospho-alpha-D-ribose 1-diphosphate-binding positions include Arg-80, Arg-105, and 132-140; that span reads DPMLATGGS. Residues Ile-195 and 200-202 contribute to the uracil site; that span reads GDA. Asp-201 is a binding site for 5-phospho-alpha-D-ribose 1-diphosphate.

The protein belongs to the UPRTase family. The cofactor is Mg(2+).

It catalyses the reaction UMP + diphosphate = 5-phospho-alpha-D-ribose 1-diphosphate + uracil. It functions in the pathway pyrimidine metabolism; UMP biosynthesis via salvage pathway; UMP from uracil: step 1/1. Allosterically activated by GTP. Functionally, catalyzes the conversion of uracil and 5-phospho-alpha-D-ribose 1-diphosphate (PRPP) to UMP and diphosphate. The polypeptide is Uracil phosphoribosyltransferase (Caldanaerobacter subterraneus subsp. tengcongensis (strain DSM 15242 / JCM 11007 / NBRC 100824 / MB4) (Thermoanaerobacter tengcongensis)).